The chain runs to 212 residues: Pyrrolidone-carboxylate peptidase (212 aa).

Active-site residues include glutamate 80, cysteine 143, and histidine 165.

It belongs to the peptidase C15 family. As to quaternary structure, homotetramer.

The protein resides in the cytoplasm. The catalysed reaction is Release of an N-terminal pyroglutamyl group from a polypeptide, the second amino acid generally not being Pro.. In terms of biological role, removes 5-oxoproline from various penultimate amino acid residues except L-proline. The protein is Pyrrolidone-carboxylate peptidase of Aliivibrio fischeri (strain MJ11) (Vibrio fischeri).